Here is a 206-residue protein sequence, read N- to C-terminus: Small ribosomal subunit protein uS3 (206 aa).

The 69-residue stretch at 39-107 (IRSYINESFK…SVEVNVVGVK (69 aa)) folds into the KH type-2 domain.

It belongs to the universal ribosomal protein uS3 family. Part of the 30S ribosomal subunit. Forms a tight complex with proteins S10 and S14.

In terms of biological role, binds the lower part of the 30S subunit head. Binds mRNA in the 70S ribosome, positioning it for translation. This Wolbachia pipientis subsp. Culex pipiens (strain wPip) protein is Small ribosomal subunit protein uS3.